An 853-amino-acid chain; its full sequence is DNA mismatch repair protein MutS (853 aa).

614 to 621 (GPNMGGKS) contacts ATP.

This sequence belongs to the DNA mismatch repair MutS family.

Its function is as follows. This protein is involved in the repair of mismatches in DNA. It is possible that it carries out the mismatch recognition step. This protein has a weak ATPase activity. This Escherichia coli O6:H1 (strain CFT073 / ATCC 700928 / UPEC) protein is DNA mismatch repair protein MutS.